The primary structure comprises 472 residues: 2-methylcitrate synthase, mitochondrial (472 aa).

Residues 1–29 (MALNLTTSRRALGSLKPLTRAAFVGARGY) constitute a mitochondrion transit peptide. CoA contacts are provided by Arg75 and Lys193. Position 271 (His271) interacts with oxaloacetate. Leu306 is a binding site for CoA. His307 is an active-site residue. Residues Val348, Gly350, and Tyr351 each coordinate CoA. Oxaloacetate contacts are provided by His353 and Arg362. His353 is an active-site residue. 3 residues coordinate CoA: Thr402, Lys403, and Asn408. Residue Asp410 is part of the active site. Arg436 and Arg456 together coordinate oxaloacetate.

It belongs to the citrate synthase family. As to quaternary structure, homodimer.

It localises to the mitochondrion matrix. The catalysed reaction is propanoyl-CoA + oxaloacetate + H2O = (2S,3S)-2-methylcitrate + CoA + H(+). It catalyses the reaction oxaloacetate + acetyl-CoA + H2O = citrate + CoA + H(+). Its pathway is organic acid metabolism; propanoate degradation. Component of the methylcitrate cycle that catalyzes the synthesis of (2S,3S)-2-methylcitrate from propionyl-CoA and oxaloacetate. Plays an important role in detoxification of propionyl-CoA, an inhibitor of both primary and secondary metabolism. Also has citrate synthase activity using as substrates acetyl-CoA and oxaloacetate. The protein is 2-methylcitrate synthase, mitochondrial of Fusarium solani (Filamentous fungus).